The primary structure comprises 842 residues: Homeobox-leucine zipper protein REVOLUTA (842 aa).

The tract at residues 1–20 is disordered; sequence MEMAVANHRERSSDSMNRHL. Over residues 7 to 20 the composition is skewed to basic and acidic residues; sequence NHRERSSDSMNRHL. Residues 22–85 constitute a DNA-binding region (homeobox); the sequence is SSGKYVRYTA…NRRCRDKQRK (64 aa). A coiled-coil region spans residues 90–121; the sequence is LQSVNRKLSAMNKLLMEENDRLQKQVSQLVCE. The START domain occupies 151–379; sequence DANSPAGLLS…LAQESNGEVV (229 aa).

It belongs to the HD-ZIP homeobox family. Class III subfamily. As to quaternary structure, homodimer. Heterodimer with ZPR1, ZPR2, ZPR3 or ZPR4. Interacts with ESR1 and ESR2. Interacts with ZPR1, ZPR2, ZPR3 and ZPR4. Heterodimerization with ZPR3 prevents DNA binding by REV. Expressed in the interfascicular regions of stem and vascular bundles of young roots and leaves.

Its subcellular location is the nucleus. Probable transcription factor involved in the regulation of interfascicular fiber (cortical cells) and secondary xylem differentiation in the inflorescence stems. Required for lateral shoot meristems (LSMs) and flower meristems (FMs) initiation. May be involved in the determination of vascular patterning and organ polarity. Directly regulates the expression of AGO10, ZPR1, ZPR2, ZPR3 and ZPR4. Required to regulate adaxial-abaxial polarity and leaf axial patterning. The protein is Homeobox-leucine zipper protein REVOLUTA of Arabidopsis thaliana (Mouse-ear cress).